Consider the following 291-residue polypeptide: Glutamate racemase (291 aa).

Substrate contacts are provided by residues 12 to 13 (DS) and 44 to 45 (YG). C75 functions as the Proton donor/acceptor in the catalytic mechanism. 76–77 (NT) provides a ligand contact to substrate. C187 acts as the Proton donor/acceptor in catalysis. Substrate is bound at residue 188 to 189 (TH). Low complexity predominate over residues 234-247 (ATQAAGARAQMAPS). A disordered region spans residues 234-257 (ATQAAGARAQMAPSAPEPKEGTPD).

It belongs to the aspartate/glutamate racemases family.

It carries out the reaction L-glutamate = D-glutamate. Its pathway is cell wall biogenesis; peptidoglycan biosynthesis. Provides the (R)-glutamate required for cell wall biosynthesis. This Koribacter versatilis (strain Ellin345) protein is Glutamate racemase.